Here is a 904-residue protein sequence, read N- to C-terminus: Thiamine diphosphate dependent-3-acetyloctanal synthase PigD (904 aa).

Residues 879 to 904 (RKAWAAQQPESTSTAFDQDPTQEATS) form a disordered region. Residues 886–904 (QPESTSTAFDQDPTQEATS) are compositionally biased toward polar residues.

Belongs to the TPP enzyme family. It depends on thiamine diphosphate as a cofactor.

It carries out the reaction (2E)-octenal + pyruvate + H(+) = (S)-3-acetyloctanal + CO2. It participates in antibiotic biosynthesis; prodigiosin biosynthesis. Involved in the biosynthesis of 2-methyl-3-n-amyl-pyrrole (MAP), one of the terminal products involved in the biosynthesis of the red antibiotic prodigiosin (Pig). Catalyzes the decarboxylation of pyruvate, followed by the modification of the resulting two-carbon fragment acetaldehyde at the C3 position of the 2-octenal (1,2-addition of acetaldehyde) giving 3-acetyloctanal. In vitro, it can act on a number of alpha,beta-unsaturated carbonyl compounds, including aldehydes and ketones, and can catalyze both 1,2-addition and Stetter-type 1,4-addition depending on the substrate. This Serratia marcescens protein is Thiamine diphosphate dependent-3-acetyloctanal synthase PigD.